A 133-amino-acid polypeptide reads, in one-letter code: MVVAQQLGQWAEQTALKLLKEQNYEWVASNYHSRRGEVDLIVKRGNELIFVEVKARGQGNYGQACEMVTLSKQKKIIKTAMRFLQRYPSYQDFYCRFDVICFDFPQKIAKTVQQDFSKFHYDLQWIENAFTLD.

It belongs to the UPF0102 family.

The chain is UPF0102 protein ABSDF1354 from Acinetobacter baumannii (strain SDF).